The chain runs to 259 residues: DNA-directed RNA polymerase 30 kDa polypeptide (259 aa).

The segment at 155–195 (YNTPCPNCKSRNTTPMMIQTRAADEPPLVRHACRDCKQHFK) adopts a TFIIS-type zinc-finger fold. Residues Cys159, Cys162, Cys187, and Cys190 each coordinate Zn(2+). Positions 220 to 259 (EILPDNNPSPPESPEPASPIDDGLIRATFDRNDEPPEDDE) are disordered. Residues 226-236 (NPSPPESPEPA) show a composition bias toward pro residues.

It belongs to the poxviridae DNA-directed RNA polymerase 30 kDa subunit family. In terms of assembly, the DNA-dependent RNA polymerase (vRNAP) consists of eight subunits encoded by early viral genes and termed according to their apparent molecular masses Rpo147, Rpo132, Rpo35, Rpo30, Rpo22, Rpo19, Rpo18, and Rpo7. The same holoenzyme, with the addition of the transcription-specificity factor RAP94, is used for early gene expression.

It localises to the virion. The protein resides in the host cytoplasm. It catalyses the reaction RNA(n) + a ribonucleoside 5'-triphosphate = RNA(n+1) + diphosphate. Its function is as follows. Part of the DNA-dependent RNA polymerase which catalyzes the transcription of viral DNA into RNA using the four ribonucleoside triphosphates as substrates. Responsible for the transcription of early, intermediate and late genes. DNA-dependent RNA polymerase associates with the early transcription factor (ETF), itself composed of OPG118 and OPG134, thereby allowing the early genes transcription. Late transcription, and probably also intermediate transcription, require newly synthesized RNA polymerase. The polypeptide is DNA-directed RNA polymerase 30 kDa polypeptide (OPG066) (Bos taurus (Bovine)).